Consider the following 385-residue polypeptide: Rubredoxin-NAD(+) reductase (385 aa).

Residues 8 to 11 (AGTA), 32 to 33 (SR), Ile-79, Glu-156, Asp-275, and Ile-293 contribute to the FAD site.

This sequence belongs to the FAD-dependent oxidoreductase family. Homodimer. Requires FAD as cofactor.

Its subcellular location is the cytoplasm. It catalyses the reaction 2 reduced [rubredoxin] + NAD(+) + H(+) = 2 oxidized [rubredoxin] + NADH. It functions in the pathway hydrocarbon metabolism; alkane degradation. Functionally, involved in the hydrocarbon hydroxylating system, which transfers electrons from NADH to rubredoxin reductase and then through rubredoxin to alkane 1 monooxygenase. In Pseudomonas putida (Arthrobacter siderocapsulatus), this protein is Rubredoxin-NAD(+) reductase (alkT).